The primary structure comprises 365 residues: Baculoviral IAP repeat-containing protein 7 (365 aa).

BIR repeat units lie at residues 7 to 73 (RQRS…PFLQ) and 115 to 180 (RLGS…DFLL). Residues cysteine 149, cysteine 152, histidine 169, and cysteine 176 each coordinate Zn(2+). Positions 186–234 (AFIRSVQESFFSSPETSPESVGSYEGSPVSSPGSPPVCPFLSTSVAQGA) are self-inhibits the anti-apoptotic function. A Phosphoserine modification is found at serine 198. Serine 202 is modified (phosphoserine; by MAPK1). Serine 212 carries the post-translational modification Phosphoserine. Serine 216 and serine 219 each carry phosphoserine; by MAPK1. The disordered stretch occupies residues 278–306 (TESVSVPRAPTQRERPEPPKEPAPPLSTE). Positions 288-297 (TQRERPEPPK) are enriched in basic and acidic residues. An RING-type zinc finger spans residues 318–353 (CKVCMDNDVSMVFVPCGHLVVCTECAPNLRHCPICR).

It belongs to the IAP family. Auto-ubiquitinated, and degraded in a 2-step mechanism; a caspase-independent first step and a caspase-dependent second step. In terms of processing, phosphorylated via MAPK-dependent and CDK-dependent pathways during oocyte maturation. Phosphorylation does not appear to affect caspase inhibition or autoubiquitination activity.

The protein resides in the cytoplasm. The enzyme catalyses S-ubiquitinyl-[E2 ubiquitin-conjugating enzyme]-L-cysteine + [acceptor protein]-L-lysine = [E2 ubiquitin-conjugating enzyme]-L-cysteine + N(6)-ubiquitinyl-[acceptor protein]-L-lysine.. In terms of biological role, weak apoptotic suppressor. Has E3 ubiquitin-protein ligase activity. Weak inhibitor of caspase activity. The polypeptide is Baculoviral IAP repeat-containing protein 7 (birc7) (Xenopus tropicalis (Western clawed frog)).